Reading from the N-terminus, the 308-residue chain is Methionyl-tRNA formyltransferase (308 aa).

Residue 111–114 (SLLP) coordinates (6S)-5,6,7,8-tetrahydrofolate.

Belongs to the Fmt family.

It carries out the reaction L-methionyl-tRNA(fMet) + (6R)-10-formyltetrahydrofolate = N-formyl-L-methionyl-tRNA(fMet) + (6S)-5,6,7,8-tetrahydrofolate + H(+). In terms of biological role, attaches a formyl group to the free amino group of methionyl-tRNA(fMet). The formyl group appears to play a dual role in the initiator identity of N-formylmethionyl-tRNA by promoting its recognition by IF2 and preventing the misappropriation of this tRNA by the elongation apparatus. This is Methionyl-tRNA formyltransferase from Thermodesulfovibrio yellowstonii (strain ATCC 51303 / DSM 11347 / YP87).